The chain runs to 134 residues: MSWQAYVDDHLMCDIEGHEGHRLTAAAIVGQDGSVWAQSATFPQFKPEEMNGIMTDFNEPGHLAPTGLHLGGTKYMVIQGEAGAVIRGKKGSGGITSKKTGQALVCGIYEEPVTPGQCNMVVERLGDYLLEQGL.

Cysteine 13 and cysteine 118 are oxidised to a cystine. The short motif at 84–100 (AVIRGKKGSGGITSKKT) is the Involved in PIP2 interaction element. A Phosphothreonine modification is found at threonine 114.

This sequence belongs to the profilin family. As to quaternary structure, occurs in many kinds of cells as a complex with monomeric actin in a 1:1 ratio. Phosphorylated by MAP kinases.

Its subcellular location is the cytoplasm. It localises to the cytoskeleton. Its function is as follows. Binds to actin and affects the structure of the cytoskeleton. At high concentrations, profilin prevents the polymerization of actin, whereas it enhances it at low concentrations. The sequence is that of Profilin-3 from Olea europaea (Common olive).